The following is a 190-amino-acid chain: Hypoxanthine/guanine phosphoribosyltransferase (190 aa).

It belongs to the purine/pyrimidine phosphoribosyltransferase family. Archaeal HPRT subfamily. As to quaternary structure, homodimer.

It is found in the cytoplasm. It catalyses the reaction IMP + diphosphate = hypoxanthine + 5-phospho-alpha-D-ribose 1-diphosphate. The catalysed reaction is GMP + diphosphate = guanine + 5-phospho-alpha-D-ribose 1-diphosphate. It participates in purine metabolism; IMP biosynthesis via salvage pathway; IMP from hypoxanthine: step 1/1. Functionally, catalyzes a salvage reaction resulting in the formation of IMP that is energically less costly than de novo synthesis. The sequence is that of Hypoxanthine/guanine phosphoribosyltransferase from Methanothrix thermoacetophila (strain DSM 6194 / JCM 14653 / NBRC 101360 / PT) (Methanosaeta thermophila).